A 669-amino-acid polypeptide reads, in one-letter code: 5-taurinomethyluridine-[tRNA] synthase subunit MTO1, mitochondrial (669 aa).

The N-terminal 25 residues, 1–25 (MFLLRGRGHWAAASLGRRLPLRRLR), are a transit peptide targeting the mitochondrion. FAD contacts are provided by residues 42-47 (GGGHAG), V154, S217, and Q406. K507 is modified (N6-methyllysine).

It belongs to the MnmG family. In terms of assembly, homodimer; forms a dimer in the presence of potassium. Interacts with GTPBP3; forms the GTPBP3-MTO1 complex composed of homodimers of GTPBP3 and MTO1. The cofactor is FAD. Ubiquitously expressed in various tissues, but with markedly elevated expression in tissues of high metabolic rates.

It is found in the mitochondrion. The enzyme catalyses 5,10-methylenetetrahydrofolate + uridine(34) in tRNA + taurine + GTP + A + H2O = 5-taurinomethyluridine(34) in tRNA + 7,8-dihydrofolate + GDP + AH2 + phosphate + H(+). Its function is as follows. Component of the GTPBP3-MTO1 complex that catalyzes the 5-taurinomethyluridine (taum(5)U) modification at the 34th wobble position (U34) of mitochondrial tRNAs (mt-tRNAs), which plays a role in mt-tRNA decoding and mitochondrial translation. Taum(5)U formation on mammalian mt-tRNA requires the presence of both GTPBP3-mediated GTPase activity and MTO1 catalytic activity. This Mus musculus (Mouse) protein is 5-taurinomethyluridine-[tRNA] synthase subunit MTO1, mitochondrial.